We begin with the raw amino-acid sequence, 421 residues long: Serine hydroxymethyltransferase (421 aa).

(6S)-5,6,7,8-tetrahydrofolate is bound by residues Leu121 and 125-127 (GHL). Lys230 carries the N6-(pyridoxal phosphate)lysine modification. Position 355–357 (355–357 (SPF)) interacts with (6S)-5,6,7,8-tetrahydrofolate.

It belongs to the SHMT family. Homodimer. Pyridoxal 5'-phosphate is required as a cofactor.

Its subcellular location is the cytoplasm. It carries out the reaction (6R)-5,10-methylene-5,6,7,8-tetrahydrofolate + glycine + H2O = (6S)-5,6,7,8-tetrahydrofolate + L-serine. It functions in the pathway one-carbon metabolism; tetrahydrofolate interconversion. The protein operates within amino-acid biosynthesis; glycine biosynthesis; glycine from L-serine: step 1/1. Functionally, catalyzes the reversible interconversion of serine and glycine with tetrahydrofolate (THF) serving as the one-carbon carrier. This reaction serves as the major source of one-carbon groups required for the biosynthesis of purines, thymidylate, methionine, and other important biomolecules. Also exhibits THF-independent aldolase activity toward beta-hydroxyamino acids, producing glycine and aldehydes, via a retro-aldol mechanism. This is Serine hydroxymethyltransferase from Cellvibrio japonicus (strain Ueda107) (Pseudomonas fluorescens subsp. cellulosa).